The sequence spans 661 residues: Sodium/potassium/calcium exchanger 2 (661 aa).

Residues 1–38 (MDLQQSTTITSLEKWCLDESLSGCRRHYSVKKKLKLIR) are Cytoplasmic-facing. Residues 39-59 (VLGLFMGLVAISTVSFSISAF) traverse the membrane as a helical segment. Residues 60–132 (SETDTQSTGE…DIFSLEERRK (73 aa)) lie on the Extracellular side of the membrane. Residues 99-120 (PQPPLSKEGESENSTDHAQGDY) are disordered. Basic and acidic residues predominate over residues 105 to 120 (KEGESENSTDHAQGDY). Residue Asn-111 is glycosylated (N-linked (GlcNAc...) asparagine). The chain crosses the membrane as a helical span at residues 133 to 153 (GAIILHVIGMIYMFIALAIVC). At 154–178 (DEFFVPSLTVITEKLGISDDVAGAT) the chain is on the cytoplasmic side. Residues 174 to 214 (VAGATFMAAGGSAPELFTSLIGVFIAHSNVGIGTIVGSAVF) form an Alpha-1 repeat. Residues 179-199 (FMAAGGSAPELFTSLIGVFIA) traverse the membrane as a helical segment. Over 200 to 204 (HSNVG) the chain is Extracellular. Residues 205–225 (IGTIVGSAVFNILFVIGMCAL) traverse the membrane as a helical segment. Residues 226-243 (FSREILNLTWWPLFRDVS) are Cytoplasmic-facing. The chain crosses the membrane as a helical span at residues 244-264 (FYIVDLIMLIIFFLDNVIMWW). Residue Glu-265 is a topological domain, extracellular. A helical transmembrane segment spans residues 266–286 (SLLLLTAYFCYVVFMKFNVQV). Residues 287–497 (EKWVKQMINR…PDVRKPSSRK (211 aa)) are Cytoplasmic-facing. Residues 306–336 (EAQAKPSAARDKDEPTLPAKPRLQRGGSSAS) form a disordered region. A phosphoserine mark is found at Ser-336 and Ser-340. Residues 397 to 439 (DENERQNGAANHVEKIELPNSTSTDVEMTPSSDASEPVQNGNL) form a disordered region. The span at 415-439 (PNSTSTDVEMTPSSDASEPVQNGNL) shows a compositional bias: polar residues. Residues 498–518 (FFPITFFGSITWIAVFSYLMV) traverse the membrane as a helical segment. The Extracellular segment spans residues 519–533 (WWAHQVGETIGISEE). The chain crosses the membrane as a helical span at residues 534-554 (IMGLTILAAGTSIPDLITSVI). The stretch at 541–572 (AAGTSIPDLITSVIVARKGLGDMAVSSSVGSN) is one Alpha-2 repeat. Topologically, residues 555–569 (VARKGLGDMAVSSSV) are cytoplasmic. Residues 570-590 (GSNIFDITVGLPLPWLLYTVI) form a helical membrane-spanning segment. Residues 591 to 602 (HRFQPVAVSSNG) are Extracellular-facing. A helical membrane pass occupies residues 603–623 (LFCAIVLLFIMLLFVILSIAL). Topologically, residues 624 to 630 (CKWRMNK) are cytoplasmic. Residues 631-651 (ILGFIMFGLYFVFLVVSVLLE) form a helical membrane-spanning segment. The Extracellular segment spans residues 652–661 (DRILTCPVSI).

Belongs to the Ca(2+):cation antiporter (CaCA) (TC 2.A.19) family. SLC24A subfamily.

It localises to the cell membrane. It carries out the reaction Ca(2+)(out) + K(+)(out) + 4 Na(+)(in) = Ca(2+)(in) + K(+)(in) + 4 Na(+)(out). In terms of biological role, calcium, potassium:sodium antiporter that transports 1 Ca(2+) and 1 K(+) in exchange for 4 Na(+). Required for learming and memory by regulating neuronal Ca(2+), which is essential for the development of synaptic plasticity. This chain is Sodium/potassium/calcium exchanger 2 (SLC24A2), found in Homo sapiens (Human).